The following is a 365-amino-acid chain: Histidinol-phosphate aminotransferase (365 aa).

A disordered region spans residues 1–23 (MSRPVPNPGILDIAPYTPGKSPV). Position 221 is an N6-(pyridoxal phosphate)lysine (lysine 221).

It belongs to the class-II pyridoxal-phosphate-dependent aminotransferase family. Histidinol-phosphate aminotransferase subfamily. Homodimer. Pyridoxal 5'-phosphate serves as cofactor.

The catalysed reaction is L-histidinol phosphate + 2-oxoglutarate = 3-(imidazol-4-yl)-2-oxopropyl phosphate + L-glutamate. It participates in amino-acid biosynthesis; L-histidine biosynthesis; L-histidine from 5-phospho-alpha-D-ribose 1-diphosphate: step 7/9. The polypeptide is Histidinol-phosphate aminotransferase (Rhodopseudomonas palustris (strain BisB18)).